Consider the following 209-residue polypeptide: Type III pantothenate kinase (209 aa).

Position 5–12 (5–12 (DIGNSNAN)) interacts with ATP. Substrate is bound by residues tyrosine 68 and 72-75 (GIDR). The active-site Proton acceptor is aspartate 74. Aspartate 89 is a binding site for K(+). Serine 92 provides a ligand contact to ATP. Position 144 (threonine 144) interacts with substrate.

The protein belongs to the type III pantothenate kinase family. In terms of assembly, homodimer. The cofactor is NH4(+). K(+) serves as cofactor.

It is found in the cytoplasm. The catalysed reaction is (R)-pantothenate + ATP = (R)-4'-phosphopantothenate + ADP + H(+). The protein operates within cofactor biosynthesis; coenzyme A biosynthesis; CoA from (R)-pantothenate: step 1/5. In terms of biological role, catalyzes the phosphorylation of pantothenate (Pan), the first step in CoA biosynthesis. In Campylobacter jejuni subsp. jejuni serotype O:2 (strain ATCC 700819 / NCTC 11168), this protein is Type III pantothenate kinase.